The sequence spans 691 residues: Homeobox protein NOBOX (691 aa).

The segment covering Glu-94–Glu-103 has biased composition (basic and acidic residues). The tract at residues Glu-94 to Val-233 is disordered. Over residues Pro-216–Ala-228 the composition is skewed to polar residues. The segment at residues Arg-272–Glu-363 is a DNA-binding region (homeobox). 3 disordered regions span residues Asn-366–Ser-385, Val-394–Val-437, and Gln-635–Pro-691. The span at Pro-395 to Gln-405 shows a compositional bias: pro residues. Positions Thr-420–Glu-432 are enriched in polar residues. Basic and acidic residues predominate over residues Glu-679–Pro-691.

Expressed in ovaries, testes and pancreas. Expressed within all stages of the adult female germline, from primordial follicles through to MII oocytes.

Its subcellular location is the nucleus. Functionally, transcription factor which may play a role in oogenesis. Binds preferentially to the DNA sequences 5'-TAATTG-3', 5'-TAGTTG-3' and 5'-TAATTA-3'. The sequence is that of Homeobox protein NOBOX (NOBOX) from Homo sapiens (Human).